The following is a 134-amino-acid chain: Larval cuticle protein A3A (134 aa).

The stretch at 23–26 (AAPV) is repeat 1. A disordered region spans residues 38–80 (DPHPQYSYGYDIQDGLTGDSKNQQETRDGDVVQGSYSLVDPDG). The region spanning 40-106 (HPQYSYGYDI…AVVHREPLVA (67 aa)) is the Chitin-binding type R&amp;R domain. Repeat unit 2 spans residues 111–114 (AAPA).

In terms of biological role, component of the cuticle of the larva of Tenebrio molitor. This chain is Larval cuticle protein A3A, found in Tenebrio molitor (Yellow mealworm beetle).